The chain runs to 169 residues: Myosin regulatory light chain 11 (169 aa).

At alanine 2 the chain carries N,N,N-trimethylalanine. Phosphoserine occurs at positions 15 and 16. Residues threonine 25 and threonine 35 each carry the phosphothreonine modification. Residues 25–60 enclose the EF-hand 1 domain; it reads TQIQEFKEAFTVIDQNRDGIIDKEDLRDTFAAMGRL. Residues aspartate 38, asparagine 40, aspartate 42, and aspartate 49 each contribute to the Ca(2+) site. Serine 75 bears the Phosphoserine mark. EF-hand domains are found at residues 95–130 and 131–166; these read DPED…QCDR and FSQE…GDAK. Residue threonine 101 is modified to Phosphothreonine.

As to quaternary structure, myosin is a hexamer of 2 heavy chains and 4 light chains. As to expression, expressed in fetal and adult skeletal muscle.

Myosin regulatory subunit that plays an essential role to maintain muscle integrity during early development. Plays a role in muscle contraction. The protein is Myosin regulatory light chain 11 of Homo sapiens (Human).